We begin with the raw amino-acid sequence, 338 residues long: Ferrochelatase (338 aa).

Fe cation-binding residues include His-189 and Glu-294.

It belongs to the ferrochelatase family.

The protein localises to the cytoplasm. The enzyme catalyses heme b + 2 H(+) = protoporphyrin IX + Fe(2+). The protein operates within porphyrin-containing compound metabolism; protoheme biosynthesis; protoheme from protoporphyrin-IX: step 1/1. In terms of biological role, catalyzes the ferrous insertion into protoporphyrin IX. The polypeptide is Ferrochelatase (Pseudomonas putida (strain ATCC 700007 / DSM 6899 / JCM 31910 / BCRC 17059 / LMG 24140 / F1)).